The sequence spans 101 residues: Small ribosomal subunit protein uS14 (101 aa).

The protein belongs to the universal ribosomal protein uS14 family. As to quaternary structure, part of the 30S ribosomal subunit. Contacts proteins S3 and S10.

Functionally, binds 16S rRNA, required for the assembly of 30S particles and may also be responsible for determining the conformation of the 16S rRNA at the A site. The protein is Small ribosomal subunit protein uS14 of Gluconobacter oxydans (strain 621H) (Gluconobacter suboxydans).